The following is a 448-amino-acid chain: T-box transcription factor T homolog 1 (448 aa).

Positions 54–224 form a DNA-binding region, T-box; that stretch reads LWDKFNALTN…YNPFAKAFLD (171 aa). Disordered stretches follow at residues 290-312 and 401-448; these read APYP…TAAS and TTAS…PPSL. Residues 417 to 442 are compositionally biased toward polar residues; the sequence is STDSGYGHSTTPPAPQTRITSNNWSP.

The protein resides in the nucleus. Involved in the transcriptional regulation of genes required for mesoderm formation and differentiation. In Branchiostoma floridae (Florida lancelet), this protein is T-box transcription factor T homolog 1.